A 183-amino-acid polypeptide reads, in one-letter code: Adenine phosphoribosyltransferase (183 aa).

Belongs to the purine/pyrimidine phosphoribosyltransferase family. In terms of assembly, homodimer.

It localises to the cytoplasm. It carries out the reaction AMP + diphosphate = 5-phospho-alpha-D-ribose 1-diphosphate + adenine. The protein operates within purine metabolism; AMP biosynthesis via salvage pathway; AMP from adenine: step 1/1. Catalyzes a salvage reaction resulting in the formation of AMP, that is energically less costly than de novo synthesis. In Shewanella pealeana (strain ATCC 700345 / ANG-SQ1), this protein is Adenine phosphoribosyltransferase.